Reading from the N-terminus, the 3255-residue chain is MATLDNCTQVHHMFAYNREHGTNYTRNHFRRYLAAQRIGFYYDWDDDVYECPTCEAIYHSLDEIKNWHECDPPAFDLNDFITDARLKSAPVPDLGPVIVETPKVEEKQELNFFAATPAPEVLQWKCRGLQFGSFTELETSEPVVSAPKPNCEEPARTIAKPEEPVEQETCGDGKRLLQAQMEVDKAEQDLAFAYLSASLKPRLEGRTTATIARRRDGCLVYKTKPSWSQRKGTKKILKVDTLACKNPYIPAVVDKISIAGGSSASVMHEQQKPKILHTTPSRKVATHYKRTVMNQQTLTALINQVGTIILNAEKEFEVVGCRKQKVTGKGTRHNGVRLVKLKTAHEEGHRRKVDIRIPNGLRSIVTRISARGGWHKTWTDSELSPGSSGYVLNSSKIIGEFGLRRHSIFVVRGRVYGKIIDSQSKVTHTLTHRMVQYSDVARNFWNGYSTCFMHNTPKDILHTCTSDFDVKDCGTVAALLTQTLFQFGKITCGKCAIEYKNLTRDELATRVNKEIDGTIISIQTQHPRFVHVLNFLRLIKQVLNAKNGNFGAFQETERIIGDRMDAPFSHVNKLNAIVIKGNQATSDEMAQASNHVLEIARYFKNRTENIQKGSLKSFRNKISGKAHLNPSLMCDNQLDKNGGFEWGQRSYHAKRFFDGYFETIDPSDGYSKYTIRRNPNGHRKLAIGNLIVSTNFESHRRSMVGEPIEDPGLTNQCVSKEGGAFIYPCCCVTDEYGKPTLSEIKMPTKHHLVLGNAGDPKYVDLPKEAEGKMFVAKDGYCYINIFLAMLVDVPEDQAKDFTKMAREIAVKQLGEWPSMMDVATACNILATFHPDTRRSELPRILVDHATKTFHVIDSYGSITTGYHILKANTVTQLVKFAHESLESEMQHYRVGGEPDKAPRKPAGNVPTLGISDLKNLGVESENEEHSIRPNLQRLIKAIYRPRMMRSLLTEEPYLLILSIVSPGVLMALYNSGSLERTMHEFLQTDQRLSATAQILKHLAKKVSLAKTLTIQNAILEGGAGSLNEILDAPAGRSLSYRLAKQTVEVMMARSDMDKELVDVGFSVLRDQKNELIEKSYLMDLEDSWRALPLCGKLSAMRVSRRWRDTSTPEAIPTGAADLKGRYSISVGSVSKSAILHLKGICSGAVKRVKDKWVGVQVQGVKWLAKSVHYMIPELTNILNVGTLLLTLISLGVRFRSLTGQFKEMKYKETLAREEELRKRIRTYNSTYYEIHGKHADAKQITKFITHHDPKLLEVVEFYEGPEEEEVEHQAKREDQANLERIIAFTALVMMMFDSERSDCVYRSLSKLKSLVSTCDDDVRHQSVDEIIDLFDEKKETIDFEIEGKELYSSRVVDSTFSKWWDNQLVRGNTMAHYRTEGHFMTFTRETAASVAAEIAHNEYRDILLQGGVGSGKSTGLPFHLHKKGGVLLIEPTRPLAQNVYKQLGSNPFHLSPNLRMRGACKFGSSQVTVATSGYALHFIANNAQSLKMFDFIIFDECHVLDASAMAFRCLLQEFEYQGKIIKVSATPPGRKLDFKPMHMVDITTENELSIQQFVQGQGTGVNCDATKKGDNILVYVSSYNEVDMLSKMLNDKGYKVTKVDGRTMKLGSVEVETVGTPQRKHFVVATNIIENGVTLDVDVVVDFGQKVVPILDSEHRMIRYTKKSITYGERIQRVGRVGRNKAGSAIRIGSTEMGTEEIPASIATEAAFLCFTYGLPVMTSNVSTSVLGNCTVRQARTMQKFELSPFFMVDLVHHDGTVHPAINSLLRQFKLKESDTKLSTLAIPNAVTTFWKSAREYNSLGARTTIDDAAKIPFMIKDVPEHLQEKLWETIQQYKGDAGFGRCTSANACKIAYTLSVSPFMIPATINKIDALMAEERQKLEYFQTVTANTCTISNFSISSLGDMIRSRYSTNHSRENLQKLQTVRDTIINFECQAGTSDGGTFDMETAQKLAEEYGCIDVIYHQSKGALSKRLGLKGRWNQSLICKDLLIFCGVAIGGTWMMFQSFKDGMADVIRHQGKGKRQRQKLRYRQARDNKMGIEVYGDDATMEHYFGAAYTEKGKKSGKTKGMGTKNRRFVNMYGYNPEDYSFIRFLDPLTGKTMDEQVFTDISLVQDAFGKERLKLLSEGEIESEHMRNGIRAYLVKNLTTAALEIDMTPHNSCQLGTKTNNIAGFVDREYELRQTGEARVVAPALIPKDNPITDEDIPVKHESKTLFRGLRDYNPIASAICLLTNESDGMKETMYGIGFGNTIITNQHLFRRNNGVLRVQSRHGEYVLPNTTQLKVLPCEGRDIMVIILTPDFPPFPQKLKFRPPIKGEKICLVGSLFQDKSITSTVSETSVTTPVDNSFLWKHWITTKDGHCGLPLVSSNDGYIVGIHSATSSRQTQNYHAAMPEDFHQTHLIDPVSKSWVKHWKYNPDNMVWGGINLINSTPREPFKINKLVTDLFGDAVQFQSKQDEWFASQLKGNLKAVGKSTSQLVTKHTVKGKCMMFELYLQTHEEEKEFFKPLMGAYQKSRLNREAFTKDIMKYSTPITVGIVDCDTFLKAEKGVIKRLEKLGFSGCEYVTDEEAIFQALNMKAAVGALYSGKKRDYFESYGPEEKENILRESCKRLYTGKFGVWNGSLKSELRPMEKVMANKTRVFTAAPLDTLLAGKVCVDDFNNYFYSKNIEAPWTVGMTKFYGGWNELLTKLPDGWVYCDADGSQFDSSLSPFLINSVLRIRLKFMEDWDLGEQMLKNLYTEIVYTAILTPDSTIVKKFKGNNSGQPSTVVDNTLMVVLAMTYTLHKLGFEDEEQDSMCKYFVNGDDLIIAIKPEYESLLDQFQHCFKSLGLNYDFNSRTRKREELWFMSHCGIKKDGIFIPKLEPERIVSILEWDRSDQPVHRLEAICAAMIESWGYDKLTHEIRKFYKWCLDEAPYADLAKAGKAPYIAECALKRLYTSKEASEAELEKYMEAIRSLVNDEDDDDMDEVYHQVDTKLDAGQGSKNDDKQKSSADSKDNVITEKGSGSGQVRKDDDINAGLHGKHTIPRTKAITQKMKLPMIRGKVALNLDHLLEYEPNQRDISNTRATQKQYESWYDGVKNDYDVDDNGMQLILNGLMVWCIENGTSPNINGTWVMMDSEEQVEYALKPIIEHAKPTFRQIMAHFSDAAEAYIEMRNKKKPYMPRYGRLRGLNDMGLARYAFDFYETTSATPNRAREAHNQMKAAALVGTQNRLFGMDGGGSTQEENTERHTAADVNQNMHTLLGVRGLH.

One can recognise a Peptidase S30 domain in the interval 292–437 (VMNQQTLTAL…HTLTHRMVQY (146 aa)). Residues His345, Asp354, and Ser388 each act as for P1 proteinase activity in the active site. The Involved in interaction with stylet and aphid transmission motif lies at 489–492 (KITC). The short motif at 747-749 (PTK) is the Involved in virions binding and aphid transmission element. Residues 773–895 (MFVAKDGYCY…ESEMQHYRVG (123 aa)) form the Peptidase C6 domain. Active-site for helper component proteinase activity residues include Cys781 and His854. Residues 1397-1549 (EIAHNEYRDI…PMHMVDITTE (153 aa)) form the Helicase ATP-binding domain. Position 1410–1417 (1410–1417 (GGVGSGKS)) interacts with ATP. A DECH box motif is present at residues 1499–1502 (DECH). Residues 1568-1727 (DATKKGDNIL…GLPVMTSNVS (160 aa)) form the Helicase C-terminal domain. The short motif at 2062-2069 (EKGKKSGK) is the Nuclear localization signal element. Tyr2084 is subject to O-(5'-phospho-RNA)-tyrosine. Residues 2215-2433 (SKTLFRGLRD…MVWGGINLIN (219 aa)) form the Peptidase C4 domain. Catalysis depends on for nuclear inclusion protein A activity residues His2260, Asp2295, and Cys2365. A RdRp catalytic domain is found at 2699 to 2823 (WVYCDADGSQ…AIKPEYESLL (125 aa)). The disordered stretch occupies residues 2980-3027 (TKLDAGQGSKNDDKQKSSADSKDNVITEKGSGSGQVRKDDDINAGLHG). Residues 2989-3005 (KNDDKQKSSADSKDNVI) show a composition bias toward basic and acidic residues.

It belongs to the potyviridae genome polyprotein family. As to quaternary structure, interacts with host eIF4E protein (via cap-binding region); this interaction mediates the translation of the VPg-viral RNA conjugates. Part of a complex that comprises VPg, RNA, host EIF4E and EIF4G; this interaction mediates the translation of the VPg-viral RNA conjugates. Post-translationally, VPg is uridylylated by the polymerase and is covalently attached to the 5'-end of the genomic RNA. This uridylylated form acts as a nucleotide-peptide primer for the polymerase. Potyviral RNA is expressed as two polyproteins which undergo post-translational proteolytic processing. Genome polyprotein is processed by NIa-pro, P1 and HC-pro proteinases resulting in the production of at least ten individual proteins. P3N-PIPO polyprotein is cleaved by P1 and HC-pro proteinases resulting in the production of three individual proteins. The P1 proteinase and the HC-pro cleave only their respective C-termini autocatalytically. 6K1 is essential for proper proteolytic separation of P3 from CI.

The protein localises to the host cytoplasmic vesicle. It is found in the host nucleus. It localises to the virion. It catalyses the reaction RNA(n) + a ribonucleoside 5'-triphosphate = RNA(n+1) + diphosphate. The catalysed reaction is Hydrolyzes glutaminyl bonds, and activity is further restricted by preferences for the amino acids in P6 - P1' that vary with the species of potyvirus, e.g. Glu-Xaa-Xaa-Tyr-Xaa-Gln-|-(Ser or Gly) for the enzyme from tobacco etch virus. The natural substrate is the viral polyprotein, but other proteins and oligopeptides containing the appropriate consensus sequence are also cleaved.. The enzyme catalyses Hydrolyzes a Gly-|-Gly bond at its own C-terminus, commonly in the sequence -Tyr-Xaa-Val-Gly-|-Gly, in the processing of the potyviral polyprotein.. In terms of biological role, required for aphid transmission and also has proteolytic activity. Only cleaves a Gly-Gly dipeptide at its own C-terminus. Interacts with virions and aphid stylets. Acts as a suppressor of RNA-mediated gene silencing, also known as post-transcriptional gene silencing (PTGS), a mechanism of plant viral defense that limits the accumulation of viral RNAs. May have RNA-binding activity. Functionally, has helicase activity. It may be involved in replication. Its function is as follows. Indispensable for virus replication. Mediates the cap-independent, EIF4E-dependent translation of viral genomic RNAs. Binds to the cap-binding site of host EIF4E and thus interferes with the host EIF4E-dependent mRNA export and translation. VPg-RNA directly binds EIF4E and is a template for transcription. Also forms trimeric complexes with EIF4E-EIF4G, which are templates for translation. In terms of biological role, has RNA-binding and proteolytic activities. Functionally, an RNA-dependent RNA polymerase that plays an essential role in the virus replication. Its function is as follows. Involved in aphid transmission, cell-to-cell and systemis movement, encapsidation of the viral RNA and in the regulation of viral RNA amplification. This is Genome polyprotein from Lettuce mosaic virus (strain E) (LMV).